Reading from the N-terminus, the 221-residue chain is Putative N-acetylmannosamine-6-phosphate 2-epimerase (221 aa).

Belongs to the NanE family.

The enzyme catalyses an N-acyl-D-glucosamine 6-phosphate = an N-acyl-D-mannosamine 6-phosphate. It participates in amino-sugar metabolism; N-acetylneuraminate degradation; D-fructose 6-phosphate from N-acetylneuraminate: step 3/5. In terms of biological role, converts N-acetylmannosamine-6-phosphate (ManNAc-6-P) to N-acetylglucosamine-6-phosphate (GlcNAc-6-P). This is Putative N-acetylmannosamine-6-phosphate 2-epimerase from Clostridium perfringens (strain SM101 / Type A).